The sequence spans 476 residues: Membrane-bound lytic murein transglycosylase F (476 aa).

Positions 1–16 (MIKTLFIILLCGILSA) are cleaved as a signal peptide. The non-LT domain stretch occupies residues 17–259 (CQPVDIQDVD…HLNEKYFGHV (243 aa)). The tract at residues 260–476 (KRFDYVDTRA…VPAKSHVSAQ (217 aa)) is LT domain. Residue E304 is part of the active site.

This sequence in the N-terminal section; belongs to the bacterial solute-binding protein 3 family. In the C-terminal section; belongs to the transglycosylase Slt family.

It localises to the cell outer membrane. It catalyses the reaction Exolytic cleavage of the (1-&gt;4)-beta-glycosidic linkage between N-acetylmuramic acid (MurNAc) and N-acetylglucosamine (GlcNAc) residues in peptidoglycan, from either the reducing or the non-reducing ends of the peptidoglycan chains, with concomitant formation of a 1,6-anhydrobond in the MurNAc residue.. Functionally, murein-degrading enzyme that degrades murein glycan strands and insoluble, high-molecular weight murein sacculi, with the concomitant formation of a 1,6-anhydromuramoyl product. Lytic transglycosylases (LTs) play an integral role in the metabolism of the peptidoglycan (PG) sacculus. Their lytic action creates space within the PG sacculus to allow for its expansion as well as for the insertion of various structures such as secretion systems and flagella. The protein is Membrane-bound lytic murein transglycosylase F of Shewanella frigidimarina (strain NCIMB 400).